A 347-amino-acid chain; its full sequence is uncharacterized protein (347 aa).

The next 10 helical transmembrane spans lie at 15-35 (FVPSWFAAVMGTGILAVDSLL), 46-66 (VAVGLFYFNVLLFFIFLVPWV), 84-104 (VLSAFYPTIAVSCLVLGADFI), 111-131 (FWGGVFWTLGAIGMFLFSLIV), 149-169 (GWYIPPVGLIVIPIAGSLIMP), 182-202 (INYFGWGAGFFLYLALLAVVI), 214-234 (AMAPTVWINLGPIGAGIVALI), 249-269 (FYIFSFIFWGFGLWWSLMAII), 283-303 (AMSWWAFIFPLGAYVASSHLV), and 312-332 (IDYIGFGLYWLLFFFWAITLI).

The protein belongs to the tellurite-resistance/dicarboxylate transporter (TDT) family.

It is found in the cell membrane. This is an uncharacterized protein from Methanocaldococcus jannaschii (strain ATCC 43067 / DSM 2661 / JAL-1 / JCM 10045 / NBRC 100440) (Methanococcus jannaschii).